Reading from the N-terminus, the 180-residue chain is Large ribosomal subunit protein uL5 (180 aa).

Belongs to the universal ribosomal protein uL5 family. Part of the 50S ribosomal subunit; part of the 5S rRNA/L5/L18/L25 subcomplex. Contacts the 5S rRNA and the P site tRNA. Forms a bridge to the 30S subunit in the 70S ribosome.

Functionally, this is one of the proteins that bind and probably mediate the attachment of the 5S RNA into the large ribosomal subunit, where it forms part of the central protuberance. In the 70S ribosome it contacts protein S13 of the 30S subunit (bridge B1b), connecting the 2 subunits; this bridge is implicated in subunit movement. Contacts the P site tRNA; the 5S rRNA and some of its associated proteins might help stabilize positioning of ribosome-bound tRNAs. In Pediococcus pentosaceus (strain ATCC 25745 / CCUG 21536 / LMG 10740 / 183-1w), this protein is Large ribosomal subunit protein uL5.